The chain runs to 207 residues: HTH-type transcriptional regulator BetI 2 (207 aa).

An HTH tetR-type domain is found at 8–68 (PIRRQQLIKA…ATMRQILTDL (61 aa)). A DNA-binding region (H-T-H motif) is located at residues 31–50 (TVMRIARHAGVSAGIISHYF).

The protein operates within amine and polyamine biosynthesis; betaine biosynthesis via choline pathway [regulation]. In terms of biological role, repressor involved in the biosynthesis of the osmoprotectant glycine betaine. It represses transcription of the choline transporter BetT and the genes of BetAB involved in the synthesis of glycine betaine. This chain is HTH-type transcriptional regulator BetI 2, found in Chromohalobacter salexigens (strain ATCC BAA-138 / DSM 3043 / CIP 106854 / NCIMB 13768 / 1H11).